Reading from the N-terminus, the 192-residue chain is Peptidyl-tRNA hydrolase (192 aa).

H17 is a tRNA binding site. H22 functions as the Proton acceptor in the catalytic mechanism. TRNA-binding residues include F68, N70, and N116.

The protein belongs to the PTH family. In terms of assembly, monomer.

It localises to the cytoplasm. It catalyses the reaction an N-acyl-L-alpha-aminoacyl-tRNA + H2O = an N-acyl-L-amino acid + a tRNA + H(+). Functionally, hydrolyzes ribosome-free peptidyl-tRNAs (with 1 or more amino acids incorporated), which drop off the ribosome during protein synthesis, or as a result of ribosome stalling. Catalyzes the release of premature peptidyl moieties from peptidyl-tRNA molecules trapped in stalled 50S ribosomal subunits, and thus maintains levels of free tRNAs and 50S ribosomes. The protein is Peptidyl-tRNA hydrolase of Xylella fastidiosa (strain 9a5c).